Reading from the N-terminus, the 523-residue chain is GMP synthase [glutamine-hydrolyzing] (523 aa).

A Glutamine amidotransferase type-1 domain is found at 8-205 (KILILDFGSQ…VENICGCARS (198 aa)). The active-site Nucleophile is Cys85. Residues His179 and Glu181 contribute to the active site. A GMPS ATP-PPase domain is found at 206–398 (WTPENIIEDA…LGLPAEMLNR (193 aa)). An ATP-binding site is contributed by 233–239 (SGGVDSS).

In terms of assembly, homodimer.

The catalysed reaction is XMP + L-glutamine + ATP + H2O = GMP + L-glutamate + AMP + diphosphate + 2 H(+). It participates in purine metabolism; GMP biosynthesis; GMP from XMP (L-Gln route): step 1/1. Catalyzes the synthesis of GMP from XMP. This chain is GMP synthase [glutamine-hydrolyzing], found in Haemophilus ducreyi (strain 35000HP / ATCC 700724).